The sequence spans 180 residues: Stathmin-3 (180 aa).

2 S-palmitoyl cysteine lipidation sites follow: Cys-22 and Cys-24. Residues 38–180 (GDMEVKQLDK…NKEQREEMSG (143 aa)) enclose the SLD domain. Phosphoserine occurs at positions 50, 60, 65, 68, 72, 73, and 81. A disordered region spans residues 58 to 82 (LKSPSDLSPESPMLSSPPKRKDTSL). Positions 60-74 (SPSDLSPESPMLSSP) are enriched in low complexity. The stretch at 76–179 (KRKDTSLEEL…RNKEQREEMS (104 aa)) forms a coiled coil.

It belongs to the stathmin family. In terms of assembly, interacts with STAT3. Interacts with CLU (secreted form); this interaction may act as an important modulator during neuronal differentiation. N-terminal palmitoylation promotes specific anchoring to the cytosolic leaflet of Golgi membranes and subsequent vesicular trafficking along dendrites and axons. Neuronal Stathmins are substrates for palmitoyltransferases ZDHHC3, ZDHHC7 and ZDHHC15.

The protein localises to the golgi apparatus. The protein resides in the cell projection. It is found in the growth cone. Its subcellular location is the axon. It localises to the cytoplasm. The protein localises to the cytosol. Exhibits microtubule-destabilizing activity, which is antagonized by STAT3. The polypeptide is Stathmin-3 (STMN3) (Bos taurus (Bovine)).